The sequence spans 228 residues: METQRASLCLGRWSLWLLLLALVVPSASAQALSYREAVLRAVDRLNEQSSEANLYRLLELDQPPKADEDPGTPKPVSFTVKETVCPRPTRRPPELCDFKENGRVKQCVGTVTLDQIKDPLDITCNEGVRRFPWWWPFLRRPRLRRQAFPPPNVPGPRFPPPNVPGPRFPPPNFPGPRFPPPNFPGPRFPPPNFPGPPFPPPIFPGPWFPPPPPFRPPPFGPPRFPGRR.

The signal sequence occupies residues 1–29 (METQRASLCLGRWSLWLLLLALVVPSASA). The propeptide occupies 30 to 146 (QALSYREAVL…FLRRPRLRRQ (117 aa)). 2 cysteine pairs are disulfide-bonded: Cys-85–Cys-96 and Cys-107–Cys-124. 7 repeat units span residues 148–157 (FPPPNVPGPR), 158–167 (FPPPNVPGPR), 168–177 (FPPPNFPGPR), 178–187 (FPPPNFPGPR), 188–197 (FPPPNFPGPP), 198–207 (FPPPIFPGPW), and 208–217 (FPPPPPFRPP). Residues 148–217 (FPPPNVPGPR…FPPPPPFRPP (70 aa)) are 7 X 10 AA tandem repeats. Disordered stretches follow at residues 167–195 (RFPPPNFPGPRFPPPNFPGPRFPPPNFPG) and 207–228 (WFPPPPPFRPPPFGPPRFPGRR). Proline amide is present on Pro-225. Residues 226-228 (GRR) constitute a propeptide, removed in mature form.

This sequence belongs to the cathelicidin family.

Its subcellular location is the secreted. Exerts antimicrobial activity. It is more effective against Gram-negative bacteria than Gram-positive bacteria. This chain is Prophenin-2, found in Sus scrofa (Pig).